A 564-amino-acid chain; its full sequence is Ribonuclease J (564 aa).

The Zn(2+) site is built by His85, His87, Asp89, His90, His153, and Asp175. A substrate-binding site is contributed by His375–His379. His401 contacts Zn(2+).

The protein belongs to the metallo-beta-lactamase superfamily. RNA-metabolizing metallo-beta-lactamase-like family. Bacterial RNase J subfamily. As to quaternary structure, homodimer, may be a subunit of the RNA degradosome. Requires Zn(2+) as cofactor.

It localises to the cytoplasm. Functionally, an RNase that has 5'-3' exonuclease and possibly endonuclease activity. Plays a role in 16S and 23S rRNA processing. Might have a role in mRNA maturation and/or decay. In Sinorhizobium meliloti (strain Sm2011 / Rm2011 / 2011), this protein is Ribonuclease J.